Here is a 197-residue protein sequence, read N- to C-terminus: Auxin-responsive protein IAA19 (197 aa).

The short motif at 13–17 (LRLGL) is the EAR-like (transcriptional repression) element. The span at 35-47 (MNMTSSGSNSDQC) shows a compositional bias: polar residues. Residues 35-67 (MNMTSSGSNSDQCESGVVSSGGDAEKVNDSPAA) are disordered. Residues 96–184 (LGYVKVSMDG…KRLRIMKRSD (89 aa)) enclose the PB1 domain.

Belongs to the Aux/IAA family. As to quaternary structure, homodimers and heterodimers. Interacts with the auxin response factor ARF7.

It is found in the nucleus. Functionally, aux/IAA proteins are short-lived transcriptional factors that function as repressors of early auxin response genes at low auxin concentrations. Repression is thought to result from the interaction with auxin response factors (ARFs), proteins that bind to the auxin-responsive promoter element (AuxRE). Formation of heterodimers with ARF proteins may alter their ability to modulate early auxin response genes expression. In Arabidopsis thaliana (Mouse-ear cress), this protein is Auxin-responsive protein IAA19 (IAA19).